The following is a 403-amino-acid chain: MTESTFPQYPRLVLSKGREKSLLRRHPWVFSGAVSRLEGKANLGETIDIVDHQGKWLARGAWSPASQIRARVWTFDKAESIDIAFFTRRLRQAQQWRDWLAKKDGLDSYRLIAGESDGLPGVTIDRFGHFLVLQLLSAGAEYQRAALISALQTCYPDCAIYDRSDVAVRKKEGMALTQGPVTGELPPALLPIEEHGMKLLVDIQGGHKTGYYLDQRDSRLATRRYVENQRVLNCFSYTGGFAVSALMGGCRQVVSVDTSQDALDIARQNVELNQLDLSKAEFVRDDVFKLLRAYREHGEKFDVIIMDPPKFVENKSQLMGACRGYKDINMLAIQLLNPGGILLTFSCSGLMTSDLFQKIIADAAIDAGRDVQFIEQFRQAADHPVIATYPEGLYLKGFACRVM.

In terms of domain architecture, PUA spans 9 to 88 (YPRLVLSKGR…ESIDIAFFTR (80 aa)).

This sequence belongs to the methyltransferase superfamily. RlmI family.

It localises to the cytoplasm. The catalysed reaction is cytidine(1962) in 23S rRNA + S-adenosyl-L-methionine = 5-methylcytidine(1962) in 23S rRNA + S-adenosyl-L-homocysteine + H(+). In terms of biological role, specifically methylates the cytosine at position 1962 (m5C1962) of 23S rRNA. This is Ribosomal RNA large subunit methyltransferase I from Salmonella agona (strain SL483).